Consider the following 362-residue polypeptide: Serine/threonine-protein kinase SRK2E (362 aa).

Residues serine 7, serine 18, serine 29, and serine 43 each carry the phosphoserine; by autocatalysis modification. Residues 21–277 (YELVKDIGSG…IPEIRNHEWF (257 aa)) enclose the Protein kinase domain. 27–35 (IGSGNFGVA) provides a ligand contact to ATP. Lysine 50 is an ATP binding site. Residue aspartate 140 is the Proton acceptor of the active site. The activation loop stretch occupies residues 160–186 (DFGYSKSSVLHSQPKSTVGTPAYIAPE). The residue at position 175 (serine 175) is a Phosphoserine. The interval 283 to 318 (ADLMNDNTMTTQFDESDQPGQSIEEIMQIIAEATVP) is domain I; osmotic stress response, required for the kinase activity. The interval 319-362 (PAGTQNLNHYLTGSLDIDDDMEEDLESDLDDLDIDSSGEIVYAM) is domain II; ABA response and ABI1 binding.

This sequence belongs to the protein kinase superfamily. Ser/Thr protein kinase family. As to quaternary structure, interacts with ABI1, PP2CA and SLAC1. Interacts with B'ALPHA, B'BETA, B'DELTA, PP2AA2, PP2AA3, PP2A1 and PP2A2. Associates with MAPKKK18 within the nucleus. Interacts with I-2, TOPP1 and TOPP2. Interacts with ABI2. Post-translationally, autophosphorylation on residues Ser-7, Ser-18, Ser-29, Ser-43, Ser-175 and/or Thr-176. Only the phosphorylation of Ser-175 is crucial for the kinase activity. The phosphorylation of Ser-43 may repress the ABA signaling pathway in absence of ABA. Expressed in seedlings, leaves, flowers, stems, and roots, but restricted to guard cells and vascular tissue.

The protein localises to the nucleus. It carries out the reaction L-seryl-[protein] + ATP = O-phospho-L-seryl-[protein] + ADP + H(+). The enzyme catalyses L-threonyl-[protein] + ATP = O-phospho-L-threonyl-[protein] + ADP + H(+). With respect to regulation, kinase activity enhanced by ABA and low humidity. Repressed by PP2CA independently of its phosphatase activity. Probably inactivated by ABI1. Repressed by TOPP1. Negatively regulated by ABI2. Functionally, activator of the abscisic acid (ABA) signaling pathway that regulates numerous ABA responses, such as stomata closure in response to drought, darkness, high CO(2), plant pathogens, or decreases in atmospheric relative humidity (RH). Involved in the resistance to drought by avoiding water loss. Required for the stomata closure mediated by pathogen-associated molecular pattern (PAMPs) (e.g. flg22 and LPS) of pathogenic bacteria such as P.syringae pv. tomato (Pst) and E.coli O157:H7. As a plant defense process, stomata are closed transiently in order to limit invaders, but actively reopened by bacteria after a few hours; virulent strains (e.g. Pst DC3000) are more efficient than avirulent strains (e.g. Pst DC3000 AvrRpt2) in reopening stomata. Mediates the phosphorylation and activation of the S-type anion efflux channel SLAC1, and thus promotes stomata closure. Essential for stomatal closure in response to reactive oxygen species (ROS). Promotes MAPKKK18 activity upon abscisic acid (ABA) treatment. The polypeptide is Serine/threonine-protein kinase SRK2E (Arabidopsis thaliana (Mouse-ear cress)).